Reading from the N-terminus, the 383-residue chain is S-adenosylmethionine synthase (383 aa).

Residue H22 participates in ATP binding. D24 is a Mg(2+) binding site. E50 contributes to the K(+) binding site. Positions 63 and 99 each coordinate L-methionine. The interval 99-109 (QSLEINQAVLK) is flexible loop. ATP is bound by residues 160-162 (DMK), D235, 241-242 (RK), S258, and K262. D235 serves as a coordination point for L-methionine. L-methionine is bound at residue K266.

Belongs to the AdoMet synthase family. As to quaternary structure, homotetramer; dimer of dimers. Requires Mg(2+) as cofactor. The cofactor is K(+).

Its subcellular location is the cytoplasm. It catalyses the reaction L-methionine + ATP + H2O = S-adenosyl-L-methionine + phosphate + diphosphate. It functions in the pathway amino-acid biosynthesis; S-adenosyl-L-methionine biosynthesis; S-adenosyl-L-methionine from L-methionine: step 1/1. In terms of biological role, catalyzes the formation of S-adenosylmethionine (AdoMet) from methionine and ATP. The overall synthetic reaction is composed of two sequential steps, AdoMet formation and the subsequent tripolyphosphate hydrolysis which occurs prior to release of AdoMet from the enzyme. The chain is S-adenosylmethionine synthase from Mycoplasma genitalium (strain ATCC 33530 / DSM 19775 / NCTC 10195 / G37) (Mycoplasmoides genitalium).